Here is a 56-residue protein sequence, read N- to C-terminus: MAVQQNKPTRSKRGMRRSHDSLTTAALSVDKVSGETHLRHHITADGYYRGRKVIVK.

Positions 1–26 are disordered; the sequence is MAVQQNKPTRSKRGMRRSHDSLTTAA.

This sequence belongs to the bacterial ribosomal protein bL32 family.

The polypeptide is Large ribosomal subunit protein bL32 (Erwinia tasmaniensis (strain DSM 17950 / CFBP 7177 / CIP 109463 / NCPPB 4357 / Et1/99)).